Reading from the N-terminus, the 163-residue chain is Lysosomal enzyme trafficking factor (163 aa).

2 helical membrane passes run 40 to 60 (MGWIGVGLYLLASAAAFYYVF) and 98 to 118 (LPFWVWTVIFLVPYLQMFLFL).

The protein belongs to the LYSET family. As to quaternary structure, interacts with GNPTAB; this interaction is important for proper localization of GNPTAB in Golgi stacks. Interacts with MBTPS1.

The protein localises to the golgi apparatus membrane. In terms of biological role, required for mannose-6-phosphate-dependent trafficking of lysosomal enzymes. LYSET bridges GlcNAc-1-phosphate transferase (GNPTAB), to the membrane-bound transcription factor site-1 protease (MBTPS1), thus allowing proteolytic activation of the GNPTAB. GNPTAB is involved in the regulation of M6P-dependent Golgi-to-lysosome trafficking of lysosomal enzymes. LYSET is thus an essential factor for maturation and delivery of lysosomal hydrolases. Functionally, (Microbial infection) Essential for infection by muliple viruses, including SARS-CoV-2, that utilize activated cathepsins for entry after M6P-dependent lysosomal transport. This is Lysosomal enzyme trafficking factor from Homo sapiens (Human).